The primary structure comprises 139 residues: Acidic phospholipase A2 BpPLA2-TXI (139 aa).

The N-terminal stretch at 1 to 16 is a signal peptide; the sequence is MRTLWIMAVLLVGVEG. A disulfide bridge links C44 with C60. G45 and G47 together coordinate Ca(2+). H63 is an active-site residue. Ca(2+) is bound at residue D64. 3 disulfides stabilise this stretch: C65–C139, C73–C97, and C91–C102.

This sequence belongs to the phospholipase A2 family. Group II subfamily. D49 sub-subfamily. It depends on Ca(2+) as a cofactor. As to expression, expressed by the venom gland.

It is found in the secreted. It catalyses the reaction a 1,2-diacyl-sn-glycero-3-phosphocholine + H2O = a 1-acyl-sn-glycero-3-phosphocholine + a fatty acid + H(+). Its function is as follows. PLA2 catalyzes the calcium-dependent hydrolysis of the 2-acyl groups in 3-sn-phosphoglycerides. The protein is Acidic phospholipase A2 BpPLA2-TXI of Bothrops pauloensis (Neuwied's lancehead).